The following is a 118-amino-acid chain: Phosphoribosyl-AMP cyclohydrolase (118 aa).

Residue D87 coordinates Mg(2+). C88 lines the Zn(2+) pocket. Mg(2+) is bound by residues D89 and D91. Zn(2+) is bound by residues C104 and C111.

The protein belongs to the PRA-CH family. In terms of assembly, homodimer. Requires Mg(2+) as cofactor. It depends on Zn(2+) as a cofactor.

It localises to the cytoplasm. It catalyses the reaction 1-(5-phospho-beta-D-ribosyl)-5'-AMP + H2O = 1-(5-phospho-beta-D-ribosyl)-5-[(5-phospho-beta-D-ribosylamino)methylideneamino]imidazole-4-carboxamide. The protein operates within amino-acid biosynthesis; L-histidine biosynthesis; L-histidine from 5-phospho-alpha-D-ribose 1-diphosphate: step 3/9. Catalyzes the hydrolysis of the adenine ring of phosphoribosyl-AMP. The polypeptide is Phosphoribosyl-AMP cyclohydrolase (Corynebacterium glutamicum (strain R)).